The sequence spans 103 residues: Histone H4.1 (103 aa).

Residues 1-14 show a composition bias toward gly residues; it reads MSGRGKGGKGLGKG. Residues 1 to 20 are disordered; sequence MSGRGKGGKGLGKGGAKRHR. At lysine 6 the chain carries N6-acetyl-N6-methyllysine; alternate. N6-methyllysine; alternate occurs at positions 6, 9, and 13. An N6-acetyl-N6-methyllysine; alternate modification is found at lysine 13. A DNA-binding region spans residues 17-21; sequence KRHRK. Lysine 92 carries the post-translational modification N6-glutaryllysine.

The protein belongs to the histone H4 family. In terms of assembly, the nucleosome is a histone octamer containing two molecules each of H2A, H2B, H3 and H4 assembled in one H3-H4 heterotetramer and two H2A-H2B heterodimers. The octamer wraps approximately 147 bp of DNA. In terms of processing, glutarylation at Lys-92 (H4K91glu) destabilizes nucleosomes by promoting dissociation of the H2A-H2B dimers from nucleosomes.

Its subcellular location is the nucleus. The protein resides in the chromosome. Its function is as follows. Core component of nucleosome. Nucleosomes wrap and compact DNA into chromatin, limiting DNA accessibility to the cellular machineries which require DNA as a template. Histones thereby play a central role in transcription regulation, DNA repair, DNA replication and chromosomal stability. DNA accessibility is regulated via a complex set of post-translational modifications of histones, also called histone code, and nucleosome remodeling. This chain is Histone H4.1 (hhfA), found in Emericella nidulans (strain FGSC A4 / ATCC 38163 / CBS 112.46 / NRRL 194 / M139) (Aspergillus nidulans).